The chain runs to 199 residues: uncharacterized protein (199 aa).

The next 7 membrane-spanning stretches (helical) occupy residues 10–32 (LTSQ…FIGY), 37–59 (VYSA…INYY), 63–80 (LIVI…FALI), 83–100 (LGLI…GVYL), 104–121 (YQVY…INLF), 126–148 (LTVL…MGIT), and 163–185 (FDAI…TGII).

The protein resides in the cell membrane. This is an uncharacterized protein from Archaeoglobus fulgidus (strain ATCC 49558 / DSM 4304 / JCM 9628 / NBRC 100126 / VC-16).